The chain runs to 423 residues: Putative competence-damage inducible protein (423 aa).

The protein belongs to the CinA family.

The sequence is that of Putative competence-damage inducible protein from Streptococcus pyogenes serotype M2 (strain MGAS10270).